Consider the following 915-residue polypeptide: Isoleucine--tRNA ligase (915 aa).

A 'HIGH' region motif is present at residues 64–74; the sequence is PYANGNFHVGH. L-isoleucyl-5'-AMP is bound at residue Glu-557. Residues 598-602 carry the 'KMSKS' region motif; it reads AMSKS. Lys-601 contributes to the ATP binding site. Cys-887, Cys-890, Cys-902, and Cys-905 together coordinate Zn(2+).

This sequence belongs to the class-I aminoacyl-tRNA synthetase family. IleS type 1 subfamily. In terms of assembly, monomer. Zn(2+) is required as a cofactor.

The protein localises to the cytoplasm. It catalyses the reaction tRNA(Ile) + L-isoleucine + ATP = L-isoleucyl-tRNA(Ile) + AMP + diphosphate. Functionally, catalyzes the attachment of isoleucine to tRNA(Ile). As IleRS can inadvertently accommodate and process structurally similar amino acids such as valine, to avoid such errors it has two additional distinct tRNA(Ile)-dependent editing activities. One activity is designated as 'pretransfer' editing and involves the hydrolysis of activated Val-AMP. The other activity is designated 'posttransfer' editing and involves deacylation of mischarged Val-tRNA(Ile). The chain is Isoleucine--tRNA ligase from Leptospira biflexa serovar Patoc (strain Patoc 1 / ATCC 23582 / Paris).